The primary structure comprises 96 residues: Dynein light chain roadblock-type 2 (96 aa).

Alanine 2 carries the N-acetylalanine modification.

Belongs to the GAMAD family. In terms of assembly, homodimer. The cytoplasmic dynein 1 complex consists of two catalytic heavy chains (HCs) and a number of non-catalytic subunits presented by intermediate chains (ICs), light intermediate chains (LICs) and light chains (LCs); the composition seems to vary in respect to the IC, LIC and LC composition. The heavy chain homodimer serves as a scaffold for the probable homodimeric assembly of the respective non-catalytic subunits. The ICs and LICs bind directly to the HC dimer and the LCs assemble on the IC dimer. Interacts with DYNC1I1 and DYNC1I2. Self-associates. Interacts with DYNLRB1.

It localises to the cytoplasm. It is found in the cytoskeleton. In terms of biological role, acts as one of several non-catalytic accessory components of the cytoplasmic dynein 1 complex that are thought to be involved in linking dynein to cargos and to adapter proteins that regulate dynein function. Cytoplasmic dynein 1 acts as a motor for the intracellular retrograde motility of vesicles and organelles along microtubules. This is Dynein light chain roadblock-type 2 (DYNLRB2) from Bos taurus (Bovine).